A 170-amino-acid polypeptide reads, in one-letter code: Ribosome maturation factor RimP (170 aa).

Belongs to the RimP family.

The protein resides in the cytoplasm. Its function is as follows. Required for maturation of 30S ribosomal subunits. This chain is Ribosome maturation factor RimP, found in Chlorobaculum parvum (strain DSM 263 / NCIMB 8327) (Chlorobium vibrioforme subsp. thiosulfatophilum).